A 539-amino-acid polypeptide reads, in one-letter code: Transcription factor prr1 (539 aa).

The DNA-binding element occupies 7–111 (SSDFVRKLFN…LLDNIKRKAP (105 aa)). Position 221 is a phosphothreonine (Thr221). Ser223 is modified (phosphoserine). Polar residues predominate over residues 251–263 (GTAQPSLYNTPSS). Residues 251–281 (GTAQPSLYNTPSSDYELANQEKPADSMASAA) form a disordered region. One can recognise a Response regulatory domain in the interval 369–483 (RILLVEDDEL…TLLQLLKKQL (115 aa)). 4-aspartylphosphate is present on Asp418.

This sequence in the N-terminal section; belongs to the HSF family.

It localises to the nucleus. Involved in oxidative stress. Transcription factor that acts upon trr1 and ctt1. This is Transcription factor prr1 (prr1) from Schizosaccharomyces pombe (strain 972 / ATCC 24843) (Fission yeast).